Consider the following 144-residue polypeptide: Prefoldin subunit alpha (144 aa).

Belongs to the prefoldin alpha subunit family. As to quaternary structure, heterohexamer of two alpha and four beta subunits.

It is found in the cytoplasm. Molecular chaperone capable of stabilizing a range of proteins. Seems to fulfill an ATP-independent, HSP70-like function in archaeal de novo protein folding. This Metallosphaera sedula (strain ATCC 51363 / DSM 5348 / JCM 9185 / NBRC 15509 / TH2) protein is Prefoldin subunit alpha.